The sequence spans 349 residues: Aspartate-semialdehyde dehydrogenase (349 aa).

Residues 12–15 and 39–40 each bind NADP(+); these read TGSV and NS. Phosphate is bound at residue R113. Catalysis depends on C148, which acts as the Acyl-thioester intermediate. Q175 contacts substrate. An NADP(+)-binding site is contributed by 178 to 179; that stretch reads SG. E201 lines the substrate pocket. K204 is a binding site for phosphate. R234 serves as a coordination point for substrate. H241 serves as the catalytic Proton acceptor. An NADP(+)-binding site is contributed by 326 to 327; the sequence is NT.

Belongs to the aspartate-semialdehyde dehydrogenase family. In terms of assembly, homodimer.

It carries out the reaction L-aspartate 4-semialdehyde + phosphate + NADP(+) = 4-phospho-L-aspartate + NADPH + H(+). It participates in amino-acid biosynthesis; L-lysine biosynthesis via DAP pathway; (S)-tetrahydrodipicolinate from L-aspartate: step 2/4. The protein operates within amino-acid biosynthesis; L-methionine biosynthesis via de novo pathway; L-homoserine from L-aspartate: step 2/3. Its pathway is amino-acid biosynthesis; L-threonine biosynthesis; L-threonine from L-aspartate: step 2/5. In terms of biological role, catalyzes the NADPH-dependent formation of L-aspartate-semialdehyde (L-ASA) by the reductive dephosphorylation of L-aspartyl-4-phosphate. In Leptospira interrogans serogroup Icterohaemorrhagiae serovar Lai (strain 56601), this protein is Aspartate-semialdehyde dehydrogenase.